Here is a 108-residue protein sequence, read N- to C-terminus: UPF0145 protein Tery_3795 (108 aa).

This sequence belongs to the UPF0145 family.

The sequence is that of UPF0145 protein Tery_3795 from Trichodesmium erythraeum (strain IMS101).